A 193-amino-acid polypeptide reads, in one-letter code: Peptidyl-tRNA hydrolase (193 aa).

Y16 serves as a coordination point for tRNA. H21 (proton acceptor) is an active-site residue. Residues F67, N69, and N115 each contribute to the tRNA site.

The protein belongs to the PTH family. As to quaternary structure, monomer.

It is found in the cytoplasm. It catalyses the reaction an N-acyl-L-alpha-aminoacyl-tRNA + H2O = an N-acyl-L-amino acid + a tRNA + H(+). Functionally, hydrolyzes ribosome-free peptidyl-tRNAs (with 1 or more amino acids incorporated), which drop off the ribosome during protein synthesis, or as a result of ribosome stalling. Catalyzes the release of premature peptidyl moieties from peptidyl-tRNA molecules trapped in stalled 50S ribosomal subunits, and thus maintains levels of free tRNAs and 50S ribosomes. The sequence is that of Peptidyl-tRNA hydrolase from Psychrobacter arcticus (strain DSM 17307 / VKM B-2377 / 273-4).